The sequence spans 336 residues: PHD finger protein 11 (336 aa).

The tract at residues 1–20 (MAEETAPPCGPVSTGGSLSP) is disordered. Residues 25–61 (KRTCALCPDGHEWSVIYFAPSANIAAHENCLLYSSGL) form a C2HC pre-PHD-type zinc finger. The segment at 91-143 (LKCSLCNKGGATVGCDLSSCRKSYHYVCAKKDHAIPQVDEDLGTYKIFCPEHP) adopts a PHD-type zinc-finger fold. Disordered stretches follow at residues 139-179 (CPEH…KKMK) and 303-336 (DPSG…GDSL). Positions 303-314 (DPSGSTSGSLLP) are enriched in low complexity.

In terms of assembly, interacts with BRCA1 and RELA.

It is found in the nucleus. Functionally, positive regulator of Th1-type cytokine gene expression. The sequence is that of PHD finger protein 11 (Phf11) from Rattus norvegicus (Rat).